The sequence spans 405 residues: Arginine biosynthesis bifunctional protein ArgJ (405 aa).

Substrate-binding residues include Thr152, Lys178, Thr189, Glu276, Asn400, and Thr405. Thr189 (nucleophile) is an active-site residue.

The protein belongs to the ArgJ family. In terms of assembly, heterotetramer of two alpha and two beta chains.

The protein resides in the cytoplasm. The catalysed reaction is N(2)-acetyl-L-ornithine + L-glutamate = N-acetyl-L-glutamate + L-ornithine. It catalyses the reaction L-glutamate + acetyl-CoA = N-acetyl-L-glutamate + CoA + H(+). Its pathway is amino-acid biosynthesis; L-arginine biosynthesis; L-ornithine and N-acetyl-L-glutamate from L-glutamate and N(2)-acetyl-L-ornithine (cyclic): step 1/1. The protein operates within amino-acid biosynthesis; L-arginine biosynthesis; N(2)-acetyl-L-ornithine from L-glutamate: step 1/4. Catalyzes two activities which are involved in the cyclic version of arginine biosynthesis: the synthesis of N-acetylglutamate from glutamate and acetyl-CoA as the acetyl donor, and of ornithine by transacetylation between N(2)-acetylornithine and glutamate. This Pseudomonas putida (strain ATCC 47054 / DSM 6125 / CFBP 8728 / NCIMB 11950 / KT2440) protein is Arginine biosynthesis bifunctional protein ArgJ.